Consider the following 287-residue polypeptide: Cuticle collagen 38 (287 aa).

The signal sequence occupies residues Met1 to Gly19. Residues Gln95 to His287 are disordered. The span at Pro98–Leu107 shows a compositional bias: pro residues. Collagen-like domains lie at Gln145–Gly200 and Gly215–Pro273. Residues Thr184–Asp205 are compositionally biased toward low complexity. A compositionally biased stretch (gly residues) spans Gly206–Gly215. Low complexity predominate over residues Asp238–Gln252.

This sequence belongs to the cuticular collagen family. As to quaternary structure, collagen polypeptide chains are complexed within the cuticle by disulfide bonds and other types of covalent cross-links.

The protein resides in the nucleus. In terms of biological role, probable cuticular collagen-like protein. Nematode cuticles are composed largely of collagen-like proteins. The cuticle functions both as an exoskeleton and as a barrier to protect the worm from its environment. Acts downstream of the Wnt signaling pathway, perhaps in the formation of the adult cuticle. The sequence is that of Cuticle collagen 38 from Caenorhabditis elegans.